Here is a 179-residue protein sequence, read N- to C-terminus: tRNA (cytidine(56)-2'-O)-methyltransferase (179 aa).

S-adenosyl-L-methionine contacts are provided by residues leucine 82, 110 to 114 (GAEKV), and 128 to 135 (VGNQPHSE).

This sequence belongs to the aTrm56 family. As to quaternary structure, homodimer.

It localises to the cytoplasm. It catalyses the reaction cytidine(56) in tRNA + S-adenosyl-L-methionine = 2'-O-methylcytidine(56) in tRNA + S-adenosyl-L-homocysteine + H(+). Its function is as follows. Specifically catalyzes the AdoMet-dependent 2'-O-ribose methylation of cytidine at position 56 in tRNAs. The protein is tRNA (cytidine(56)-2'-O)-methyltransferase of Methanocaldococcus jannaschii (strain ATCC 43067 / DSM 2661 / JAL-1 / JCM 10045 / NBRC 100440) (Methanococcus jannaschii).